The following is a 526-amino-acid chain: Probable di/tripeptide-binding protein 5 (526 aa).

The first 21 residues, 1–21 (MRLAAFSLFLAPLLLAQPAAA), serve as a signal peptide directing secretion.

This sequence belongs to the bacterial solute-binding protein 5 family. The complex is composed of two ATP-binding proteins (DppD and DppF), two transmembrane proteins (DppB and DppC) and a solute-binding protein (DppA5). Five orthologous SBPs (DppA1-A5) are present in P.aeruginosa, which increases the substrate specificity of the DppBCDF transporter.

Its function is as follows. Part of the ABC transporter DppABCDF involved in the uptake of various di/tripeptides. The chain is Probable di/tripeptide-binding protein 5 from Pseudomonas aeruginosa (strain UCBPP-PA14).